Here is a 543-residue protein sequence, read N- to C-terminus: tRNA (guanine(37)-N(1))-methyltransferase (543 aa).

The transit peptide at M1 to T59 directs the protein to the mitochondrion. Residues H282, D320–L321, and D348–G349 contribute to the S-adenosyl-L-methionine site. A disordered region spans residues D366–M405. N431 contacts S-adenosyl-L-methionine.

This sequence belongs to the class I-like SAM-binding methyltransferase superfamily. TRM5/TYW2 family. Monomer.

The protein localises to the mitochondrion matrix. It is found in the nucleus. The protein resides in the cytoplasm. It catalyses the reaction guanosine(37) in tRNA + S-adenosyl-L-methionine = N(1)-methylguanosine(37) in tRNA + S-adenosyl-L-homocysteine + H(+). Its function is as follows. Specifically methylates the N1 position of guanosine-37 in various cytoplasmic and mitochondrial tRNAs. Methylation is not dependent on the nature of the nucleoside 5' of the target nucleoside. This is the first step in the biosynthesis of wybutosine (yW), a modified base adjacent to the anticodon of tRNAs and required for accurate decoding. In Cryptococcus neoformans var. neoformans serotype D (strain JEC21 / ATCC MYA-565) (Filobasidiella neoformans), this protein is tRNA (guanine(37)-N(1))-methyltransferase.